The sequence spans 237 residues: Large ribosomal subunit protein uL1 (237 aa).

This sequence belongs to the universal ribosomal protein uL1 family. In terms of assembly, part of the 50S ribosomal subunit.

In terms of biological role, binds directly to 23S rRNA. The L1 stalk is quite mobile in the ribosome, and is involved in E site tRNA release. Its function is as follows. Protein L1 is also a translational repressor protein, it controls the translation of the L11 operon by binding to its mRNA. The chain is Large ribosomal subunit protein uL1 from Synechococcus sp. (strain ATCC 27144 / PCC 6301 / SAUG 1402/1) (Anacystis nidulans).